The sequence spans 235 residues: Aspartate/glutamate leucyltransferase (235 aa).

It belongs to the R-transferase family. Bpt subfamily.

Its subcellular location is the cytoplasm. The catalysed reaction is N-terminal L-glutamyl-[protein] + L-leucyl-tRNA(Leu) = N-terminal L-leucyl-L-glutamyl-[protein] + tRNA(Leu) + H(+). It carries out the reaction N-terminal L-aspartyl-[protein] + L-leucyl-tRNA(Leu) = N-terminal L-leucyl-L-aspartyl-[protein] + tRNA(Leu) + H(+). Functions in the N-end rule pathway of protein degradation where it conjugates Leu from its aminoacyl-tRNA to the N-termini of proteins containing an N-terminal aspartate or glutamate. The polypeptide is Aspartate/glutamate leucyltransferase (Shewanella putrefaciens (strain CN-32 / ATCC BAA-453)).